Reading from the N-terminus, the 169-residue chain is Protein yop1 (169 aa).

Residues Met1–Pro35 lie on the Cytoplasmic side of the membrane. The chain crosses the membrane as a helical span at residues Lys36–Ile55. A topological domain (lumenal) is located at residue Ala56. The helical transmembrane segment at Gly57–Ala76 threads the bilayer. The Cytoplasmic segment spans residues Leu77–Thr86. A helical transmembrane segment spans residues Gln87–Ser103. The Lumenal portion of the chain corresponds to Ala104–Ile105. A helical transmembrane segment spans residues Asn106 to Trp124. The Cytoplasmic segment spans residues Met125–Gln169.

The protein belongs to the DP1 family. As to quaternary structure, oligomer.

It is found in the endoplasmic reticulum membrane. The protein localises to the golgi apparatus membrane. In terms of biological role, required to generate and maintain the structure of the tubular endoplasmic reticulum network and the vacuole. Induces high curvature in membranes and causes membrane tubule formation. Involved in membrane/vesicle trafficking. The sequence is that of Protein yop1 (yop1) from Aspergillus fumigatus (strain ATCC MYA-4609 / CBS 101355 / FGSC A1100 / Af293) (Neosartorya fumigata).